A 278-amino-acid polypeptide reads, in one-letter code: Replication protein A 32 kDa subunit B (278 aa).

Residues V70–P143 constitute a DNA-binding region (OB).

Belongs to the replication factor A protein 2 family. In terms of assembly, heterotrimer of RPA1, RPA2 and RPA3 (canonical replication protein A complex). In terms of processing, phosphorylated in a cell-cycle-dependent manner (from the S phase until mitosis). In response to DNA damage, recruited to DNA-repair nuclear foci, as a hypophosphorylated form.

It localises to the nucleus. In terms of biological role, component of the replication protein A complex (RPA) required for DNA recombination, repair and replication. The activity of RPA is mediated by single-stranded DNA binding and protein interactions. Required fo cell division in meristems. Involved in the maintenance of transcriptional epigenetic gene silencing (TGS) at specific loci (including some transposons) by regulating histone H3 acetylation, 'Lys-4' and 'Lys-9' methylation. This is Replication protein A 32 kDa subunit B (RPA2B) from Arabidopsis thaliana (Mouse-ear cress).